A 405-amino-acid chain; its full sequence is L-carnitine CoA-transferase (405 aa).

CoA contacts are provided by K97 and R104. D169 acts as the Nucleophile in catalysis.

It belongs to the CoA-transferase III family. CaiB subfamily. Homodimer.

The protein localises to the cytoplasm. The catalysed reaction is crotonobetainyl-CoA + (R)-carnitine = crotonobetaine + (R)-carnitinyl-CoA. It carries out the reaction 4-(trimethylamino)butanoyl-CoA + (R)-carnitine = (R)-carnitinyl-CoA + 4-(trimethylamino)butanoate. It functions in the pathway amine and polyamine metabolism; carnitine metabolism. Functionally, catalyzes the reversible transfer of the CoA moiety from gamma-butyrobetainyl-CoA to L-carnitine to generate L-carnitinyl-CoA and gamma-butyrobetaine. Is also able to catalyze the reversible transfer of the CoA moiety from gamma-butyrobetainyl-CoA or L-carnitinyl-CoA to crotonobetaine to generate crotonobetainyl-CoA. This chain is L-carnitine CoA-transferase, found in Escherichia coli O127:H6 (strain E2348/69 / EPEC).